Reading from the N-terminus, the 439-residue chain is Ectonucleotide pyrophosphatase/phosphodiesterase family member 7 (439 aa).

Residues 1–21 (MGHSAVLLCVALAILPACVTG) form the signal peptide. Over 22 to 414 (APVQRQHKLL…ILRPMLRSGS (393 aa)) the chain is Extracellular. Zn(2+) is bound by residues Asp-36 and Thr-72. The segment at 69 to 75 (VTMTSPC) is required for enzyme activity. Residue Thr-72 is the Nucleophile of the active site. Asn-93 serves as a coordination point for substrate. N-linked (GlcNAc...) asparagine glycosylation is found at Asn-97, Asn-118, Asn-143, and Asn-165. The Zn(2+) site is built by Asp-196, His-200, Asp-243, and His-244. A glycan (N-linked (GlcNAc...) asparagine) is linked at Asn-264. Zn(2+) is bound at residue His-350. A helical membrane pass occupies residues 415–435 (ASLLSSQHHLVALLVGILTCL). Residues 436–439 (AKVL) are Cytoplasmic-facing.

It depends on Zn(2+) as a cofactor. Post-translationally, N-glycosylated; required for activity and transport to the plasma membrane. Expressed in liver and small intestine.

It is found in the cell membrane. It catalyses the reaction a sphingomyelin + H2O = phosphocholine + an N-acylsphing-4-enine + H(+). It carries out the reaction a 1-O-alkyl-2-acetyl-sn-glycero-3-phosphocholine + H2O = a 1-O-alkyl-2-acetyl-sn-glycerol + phosphocholine + H(+). The catalysed reaction is 1-O-octadecyl-2-acetyl-sn-glycero-3-phosphocholine + H2O = 1-O-octadecyl-2-acetyl-sn-glycerol + phosphocholine + H(+). The enzyme catalyses 1-hexadecanoyl-sn-glycero-3-phosphocholine + H2O = 1-hexadecanoyl-sn-glycerol + phosphocholine + H(+). Functionally, choline-specific phosphodiesterase that hydrolyzes sphingomyelin releasing the ceramide and phosphocholine and therefore is involved in sphingomyelin digestion, ceramide formation, and fatty acid (FA) absorption in the gastrointestinal tract. Also has phospholipase C activity and can also cleave phosphocholine from palmitoyl lyso-phosphatidylcholine and platelet-activating factor (PAF) leading to its inactivation. Does not have nucleotide pyrophosphatase activity. May promote cholesterol absorption by affecting the levels of sphingomyelin derived from either diet or endogenous sources, in the intestinal lumen. The protein is Ectonucleotide pyrophosphatase/phosphodiesterase family member 7 of Mus musculus (Mouse).